A 51-amino-acid chain; its full sequence is Mating pheromone Er-23 (51 aa).

Intrachain disulfides connect Cys3/Cys24, Cys6/Cys16, Cys13/Cys47, Cys27/Cys40, and Cys35/Cys51.

Its subcellular location is the secreted. Its function is as follows. Mating ciliate pheromones (or gamones) are diffusible extracellular communication signals that distinguish different intraspecific classes of cells commonly referred to as 'mating types'. They prepare the latter for conjugation by changing their cell surface properties. This chain is Mating pheromone Er-23 (MAT23), found in Euplotes raikovi.